Consider the following 385-residue polypeptide: Tryptophan--tRNA ligase (385 aa).

A 'HIGH' region motif is present at residues 89–98; that stretch reads PSSKTMHIGH. The 'KMSKS' region motif lies at 268 to 272; that stretch reads KMSAS.

The protein belongs to the class-I aminoacyl-tRNA synthetase family. Homodimer.

The catalysed reaction is tRNA(Trp) + L-tryptophan + ATP = L-tryptophyl-tRNA(Trp) + AMP + diphosphate + H(+). The polypeptide is Tryptophan--tRNA ligase (Encephalitozoon cuniculi (strain GB-M1) (Microsporidian parasite)).